We begin with the raw amino-acid sequence, 214 residues long: MIIVLLGPPGAGKGTQGERLAARLDVPKIATGDVLRAAVKEGTPLGLEAKAAMDRGDLVPDAVIMGIMKEALAAPSAAKGAILDGVVRTTPQAAGLNDMLVALGRPLDAVLLFEVDEDELVRRLSGRTTCEACQRPFFGRQPGETCTEGGVSGTLVRRKDDEPEAIRKRMEVYREQTSPVIHWYEKSGANLVRVDAIGTLEEVEGRVLSALRIS.

10–15 (GAGKGT) lines the ATP pocket. The NMP stretch occupies residues 30 to 59 (ATGDVLRAAVKEGTPLGLEAKAAMDRGDLV). AMP-binding positions include T31, R36, 57–59 (DLV), and Q92. Positions 126–161 (GRTTCEACQRPFFGRQPGETCTEGGVSGTLVRRKDD) are LID. R127 contacts ATP. AMP-binding residues include R158 and R169. ATP is bound at residue G198.

This sequence belongs to the adenylate kinase family. In terms of assembly, monomer.

Its subcellular location is the cytoplasm. The enzyme catalyses AMP + ATP = 2 ADP. The protein operates within purine metabolism; AMP biosynthesis via salvage pathway; AMP from ADP: step 1/1. Functionally, catalyzes the reversible transfer of the terminal phosphate group between ATP and AMP. Plays an important role in cellular energy homeostasis and in adenine nucleotide metabolism. The sequence is that of Adenylate kinase from Gemmatimonas aurantiaca (strain DSM 14586 / JCM 11422 / NBRC 100505 / T-27).